Consider the following 425-residue polypeptide: Glutamyl-tRNA reductase (425 aa).

Residues 49–52 (TCNR), Ser109, 114–116 (EGQ), and Gln120 contribute to the substrate site. The Nucleophile role is filled by Cys50. An NADP(+)-binding site is contributed by 189–194 (GAGKMS).

The protein belongs to the glutamyl-tRNA reductase family. Homodimer.

It catalyses the reaction (S)-4-amino-5-oxopentanoate + tRNA(Glu) + NADP(+) = L-glutamyl-tRNA(Glu) + NADPH + H(+). It functions in the pathway porphyrin-containing compound metabolism; protoporphyrin-IX biosynthesis; 5-aminolevulinate from L-glutamyl-tRNA(Glu): step 1/2. It participates in porphyrin-containing compound metabolism; chlorophyll biosynthesis. Catalyzes the NADPH-dependent reduction of glutamyl-tRNA(Glu) to glutamate 1-semialdehyde (GSA). In Picosynechococcus sp. (strain ATCC 27264 / PCC 7002 / PR-6) (Agmenellum quadruplicatum), this protein is Glutamyl-tRNA reductase.